We begin with the raw amino-acid sequence, 916 residues long: Protein translocase subunit SecA (916 aa).

ATP contacts are provided by residues Gln-86, 104-108 (GEGKT), and Asp-494. The segment at 859-916 (LEAPEKPAQLQYTAPSEGGGTQTRVETRSTGRSGNPAKAAEQDAAKDAAKRPAKKKRR) is disordered. Residues 880-891 (QTRVETRSTGRS) are compositionally biased toward polar residues. Over residues 898–908 (AEQDAAKDAAK) the composition is skewed to basic and acidic residues.

It belongs to the SecA family. Monomer and homodimer. Part of the essential Sec protein translocation apparatus which comprises SecA, SecYEG and auxiliary proteins SecDF. Other proteins may also be involved.

It localises to the cell membrane. It is found in the cytoplasm. The catalysed reaction is ATP + H2O + cellular proteinSide 1 = ADP + phosphate + cellular proteinSide 2.. Its function is as follows. Part of the Sec protein translocase complex. Interacts with the SecYEG preprotein conducting channel. Has a central role in coupling the hydrolysis of ATP to the transfer of proteins into and across the cell membrane, serving as an ATP-driven molecular motor driving the stepwise translocation of polypeptide chains across the membrane. The chain is Protein translocase subunit SecA from Pseudarthrobacter chlorophenolicus (strain ATCC 700700 / DSM 12829 / CIP 107037 / JCM 12360 / KCTC 9906 / NCIMB 13794 / A6) (Arthrobacter chlorophenolicus).